We begin with the raw amino-acid sequence, 117 residues long: MPRPYKCRRISEIPKVAYYKPAGIPLSLLEENQLSTEEAEALRLKDLLGLEQAEAARQMNISRPTFQRMLYSARYKVADALLKGKALRIEGGVFELDARPCCQRQIPPSQTDPPGQT.

It belongs to the UPF0251 family.

The polypeptide is UPF0251 protein DET0218 (Dehalococcoides mccartyi (strain ATCC BAA-2266 / KCTC 15142 / 195) (Dehalococcoides ethenogenes (strain 195))).